Consider the following 153-residue polypeptide: Ribosome maturation factor RimP (153 aa).

The protein belongs to the RimP family.

Its subcellular location is the cytoplasm. Required for maturation of 30S ribosomal subunits. The protein is Ribosome maturation factor RimP of Marinobacter nauticus (strain ATCC 700491 / DSM 11845 / VT8) (Marinobacter aquaeolei).